Reading from the N-terminus, the 408-residue chain is Imidazolonepropionase (408 aa).

Fe(3+)-binding residues include His-73 and His-75. Residues His-73 and His-75 each contribute to the Zn(2+) site. Residues Arg-82, Tyr-145, and His-178 each coordinate 4-imidazolone-5-propanoate. N-formimidoyl-L-glutamate is bound at residue Tyr-145. His-243 is a Fe(3+) binding site. His-243 lines the Zn(2+) pocket. Residue Gln-246 participates in 4-imidazolone-5-propanoate binding. Asp-318 lines the Fe(3+) pocket. A Zn(2+)-binding site is contributed by Asp-318. The N-formimidoyl-L-glutamate site is built by Asn-320 and Gly-322. Residue Ser-323 participates in 4-imidazolone-5-propanoate binding.

This sequence belongs to the metallo-dependent hydrolases superfamily. HutI family. The cofactor is Zn(2+). Requires Fe(3+) as cofactor.

Its subcellular location is the cytoplasm. The catalysed reaction is 4-imidazolone-5-propanoate + H2O = N-formimidoyl-L-glutamate. Its pathway is amino-acid degradation; L-histidine degradation into L-glutamate; N-formimidoyl-L-glutamate from L-histidine: step 3/3. Catalyzes the hydrolytic cleavage of the carbon-nitrogen bond in imidazolone-5-propanoate to yield N-formimidoyl-L-glutamate. It is the third step in the universal histidine degradation pathway. This is Imidazolonepropionase from Shewanella loihica (strain ATCC BAA-1088 / PV-4).